Reading from the N-terminus, the 363-residue chain is Ethanolamine kinase 1 (363 aa).

It belongs to the choline/ethanolamine kinase family.

Its subcellular location is the cytoplasm. It catalyses the reaction ethanolamine + ATP = phosphoethanolamine + ADP + H(+). It participates in phospholipid metabolism; phosphatidylethanolamine biosynthesis; phosphatidylethanolamine from ethanolamine: step 1/3. Functionally, highly specific for ethanolamine phosphorylation. May be a rate-controlling step in phosphatidylethanolamine biosynthesis. This chain is Ethanolamine kinase 1 (Etnk1), found in Mus musculus (Mouse).